We begin with the raw amino-acid sequence, 367 residues long: Undecaprenyl-phosphate alpha-N-acetylglucosaminyl 1-phosphate transferase (367 aa).

9 helical membrane-spanning segments follow: residues 3 to 23 (LLTA…FIFL), 45 to 65 (GVIP…MFGL), 69 to 89 (YIPH…VGAM), 129 to 149 (WELV…WAAI), 158 to 178 (IDGL…LILW), 187 to 207 (MWCF…LGIL), 213 to 233 (VFMG…LLLE), 242 to 262 (ISPV…VAIM), and 318 to 338 (VPEW…GYCI).

The protein belongs to the glycosyltransferase 4 family. WecA subfamily. Mg(2+) is required as a cofactor. It depends on Mn(2+) as a cofactor.

The protein resides in the cell inner membrane. The catalysed reaction is di-trans,octa-cis-undecaprenyl phosphate + UDP-N-acetyl-alpha-D-glucosamine = N-acetyl-alpha-D-glucosaminyl-di-trans,octa-cis-undecaprenyl diphosphate + UMP. Its pathway is bacterial outer membrane biogenesis; LPS O-antigen biosynthesis. It functions in the pathway bacterial outer membrane biogenesis; enterobacterial common antigen biosynthesis. Its activity is regulated as follows. Inhibited by tunicamycin. Its function is as follows. Catalyzes the transfer of the GlcNAc-1-phosphate moiety from UDP-GlcNAc onto the carrier lipid undecaprenyl phosphate (C55-P), yielding GlcNAc-pyrophosphoryl-undecaprenyl (GlcNAc-PP-C55). The sequence is that of Undecaprenyl-phosphate alpha-N-acetylglucosaminyl 1-phosphate transferase from Salmonella typhimurium (strain LT2 / SGSC1412 / ATCC 700720).